The sequence spans 652 residues: MKSLYSATSNEAAKNANVSQAEFEKRYQESIENPDEFWGREGKRIDWFKPYTKVKNTSFKRGEVSIKWFEDGELNVAYNCIDRHLAKSANKVAYYCEGDKESDEKVAITYQTLHDEVGRLANLLKRQGVKKGDRVAIYMPMIPQAVYAMLACARIGAIHSVIFGGFSAHAIADRLNDCEVKLVITADEGRRAGNTIPLKHNVDMALDNNACPTVENVIVYRYTEKDVPWFEGRDLDWAVEVENESTECPAERMNAEDPLFILYTSGSTGKPKGVVHTTGGYLVYASLTHELVFDLKPDDVYWCAADVGWITGHSYMVYGPLANGTTSILFEGVPTYPDSGRIGRVVDKFDVTILYTAPTAIRALMAKGDEATRSSKRDSLRVLGSVGEPINPEAWSWYYSEIGNSSCPIVDTWWQTETGGMMMTPRIVQGDVKPGSCTGPLYGVQPALVDAQGVLQEEQGVLVEGGLVITDSWPGQARTVYGDHERFEQTYFSTFDGMYFTGDGASRDADGHYWITGRMDDVLNVSGHRLGTAEIESALVAHPSVAEAAIVGFPHDIKGQGIYVYVSAIAGVIPDEELTKSLKLFVRQEIGPIATPDLIQWTSKGLPKTRSGKIMRRILRKIAANEHDQLGDTSTLADPSVVDDLIENRLNV.

Residues 191–194 and Thr-311 contribute to the CoA site; that span reads RAGN. ATP-binding positions include 387–389, 411–416, Asp-503, and Arg-518; these read GEP and DTWWQT. Residue Ser-526 participates in CoA binding. ATP is bound at residue Arg-529. Mg(2+) contacts are provided by Val-540, His-542, and Val-545. Arg-587 is a CoA binding site. Lys-613 is subject to N6-acetyllysine.

This sequence belongs to the ATP-dependent AMP-binding enzyme family. The cofactor is Mg(2+). Post-translationally, acetylated. Deacetylation by the SIR2-homolog deacetylase activates the enzyme.

It catalyses the reaction acetate + ATP + CoA = acetyl-CoA + AMP + diphosphate. Catalyzes the conversion of acetate into acetyl-CoA (AcCoA), an essential intermediate at the junction of anabolic and catabolic pathways. AcsA undergoes a two-step reaction. In the first half reaction, AcsA combines acetate with ATP to form acetyl-adenylate (AcAMP) intermediate. In the second half reaction, it can then transfer the acetyl group from AcAMP to the sulfhydryl group of CoA, forming the product AcCoA. This chain is Acetyl-coenzyme A synthetase, found in Marinomonas sp. (strain MWYL1).